Consider the following 263-residue polypeptide: Leucyl/phenylalanyl-tRNA--protein transferase (263 aa).

This sequence belongs to the L/F-transferase family.

The protein resides in the cytoplasm. It carries out the reaction N-terminal L-lysyl-[protein] + L-leucyl-tRNA(Leu) = N-terminal L-leucyl-L-lysyl-[protein] + tRNA(Leu) + H(+). The catalysed reaction is N-terminal L-arginyl-[protein] + L-leucyl-tRNA(Leu) = N-terminal L-leucyl-L-arginyl-[protein] + tRNA(Leu) + H(+). It catalyses the reaction L-phenylalanyl-tRNA(Phe) + an N-terminal L-alpha-aminoacyl-[protein] = an N-terminal L-phenylalanyl-L-alpha-aminoacyl-[protein] + tRNA(Phe). In terms of biological role, functions in the N-end rule pathway of protein degradation where it conjugates Leu, Phe and, less efficiently, Met from aminoacyl-tRNAs to the N-termini of proteins containing an N-terminal arginine or lysine. The polypeptide is Leucyl/phenylalanyl-tRNA--protein transferase (Novosphingobium aromaticivorans (strain ATCC 700278 / DSM 12444 / CCUG 56034 / CIP 105152 / NBRC 16084 / F199)).